Consider the following 432-residue polypeptide: Tyrosine-protein phosphatase non-receptor type 1 (432 aa).

An N-acetylmethionine modification is found at methionine 1. The 275-residue stretch at 3 to 277 (MEKEFEEIDK…RFSYLAVIEG (275 aa)) folds into the Tyrosine-protein phosphatase domain. Tyrosine 20 carries the post-translational modification Phosphotyrosine. Serine 50 is modified (phosphoserine; by CLK1, CLK2 and PKB/AKT1 or PKB/AKT2). At tyrosine 66 the chain carries Phosphotyrosine; by EGFR. Substrate is bound by residues aspartate 181 and 215-221 (CSAGIGR). Cysteine 215 serves as the catalytic Phosphocysteine intermediate. Cysteine 215 carries the post-translational modification Cysteine persulfide. Position 215 is an S-nitrosocysteine; in reversibly inhibited form (cysteine 215). Residues serine 242 and serine 243 each carry the phosphoserine; by CLK1 and CLK2 modification. Glutamine 262 contributes to the substrate binding site. Disordered stretches follow at residues 297 to 322 (EDLD…PHNG) and 335 to 399 (SEET…EEHK). Serine 335, serine 362, and serine 364 each carry phosphoserine. Over residues 354–364 (SSAMHSVSSMS) the composition is skewed to low complexity. Threonine 367 is subject to Phosphothreonine.

The protein belongs to the protein-tyrosine phosphatase family. Non-receptor class 1 subfamily. In terms of assembly, interacts with EPHA3 (phosphorylated); dephosphorylates EPHA3 and may regulate its trafficking and function. Interacts with MET. Interacts with NCK1. Post-translationally, ser-50 is the major site of phosphorylation as compared to Ser-242 and Ser-243. Activated by phosphorylation at Ser-50. S-nitrosylation of Cys-215 inactivates the enzyme activity. In terms of processing, sulfhydration at Cys-215 following endoplasmic reticulum stress inactivates the enzyme activity, promoting EIF2AK3/PERK activity. Most abundant in testis. Also found in kidney, spleen, muscle, liver, heart and brain.

It localises to the endoplasmic reticulum membrane. It carries out the reaction O-phospho-L-tyrosyl-[protein] + H2O = L-tyrosyl-[protein] + phosphate. Tyrosine-protein phosphatase which acts as a regulator of endoplasmic reticulum unfolded protein response. Mediates dephosphorylation of EIF2AK3/PERK; inactivating the protein kinase activity of EIF2AK3/PERK. May play an important role in CKII- and p60c-src-induced signal transduction cascades. May regulate the EFNA5-EPHA3 signaling pathway which modulates cell reorganization and cell-cell repulsion. May also regulate the hepatocyte growth factor receptor signaling pathway through dephosphorylation of MET. This Mus musculus (Mouse) protein is Tyrosine-protein phosphatase non-receptor type 1 (Ptpn1).